We begin with the raw amino-acid sequence, 396 residues long: Elongation factor Tu (396 aa).

The tr-type G domain occupies 10–206 (KPHVNVGTIG…ALDTYIPTPE (197 aa)). The G1 stretch occupies residues 19 to 26 (GHVDHGKT). 19 to 26 (GHVDHGKT) provides a ligand contact to GTP. Position 26 (Thr-26) interacts with Mg(2+). The tract at residues 60-64 (GITIN) is G2. Residues 81 to 84 (DCPG) form a G3 region. Residues 81–85 (DCPGH) and 136–139 (NKCD) contribute to the GTP site. Positions 136-139 (NKCD) are G4. The tract at residues 174-176 (SAK) is G5.

It belongs to the TRAFAC class translation factor GTPase superfamily. Classic translation factor GTPase family. EF-Tu/EF-1A subfamily. As to quaternary structure, monomer.

It localises to the cytoplasm. It carries out the reaction GTP + H2O = GDP + phosphate + H(+). Its function is as follows. GTP hydrolase that promotes the GTP-dependent binding of aminoacyl-tRNA to the A-site of ribosomes during protein biosynthesis. The polypeptide is Elongation factor Tu (Cupriavidus pinatubonensis (strain JMP 134 / LMG 1197) (Cupriavidus necator (strain JMP 134))).